We begin with the raw amino-acid sequence, 418 residues long: Equilibrative nucleotide transporter 6 (418 aa).

Transmembrane regions (helical) follow at residues 19 to 39, 56 to 76, 86 to 106, 112 to 132, 142 to 162, 186 to 206, 264 to 284, 291 to 311, 326 to 346, 353 to 373, and 392 to 412; these read AMIV…SMLT, VLTL…AYHE, LIGY…DLAT, FGPY…DATV, LMCP…GALT, MFLA…AYVL, HAVN…GFLY, GLGA…DLVG, KLIT…YFTA, WMIM…VCIM, and LVIF…LWLI.

The protein belongs to the SLC29A/ENT transporter (TC 2.A.57) family. As to expression, expressed in leaves and siliques.

The protein resides in the cell membrane. Functionally, nucleoside transporter that can mediate uptake of adenosine, uridine, guanosine or cytidine when expressed in a heterologous system (yeast). This Arabidopsis thaliana (Mouse-ear cress) protein is Equilibrative nucleotide transporter 6 (ENT6).